The sequence spans 285 residues: tRNA pseudouridine synthase A (285 aa).

The active-site Nucleophile is Asp-64. Position 125 (Tyr-125) interacts with substrate.

Belongs to the tRNA pseudouridine synthase TruA family. Homodimer.

The enzyme catalyses uridine(38/39/40) in tRNA = pseudouridine(38/39/40) in tRNA. In terms of biological role, formation of pseudouridine at positions 38, 39 and 40 in the anticodon stem and loop of transfer RNAs. The protein is tRNA pseudouridine synthase A of Streptomyces avermitilis (strain ATCC 31267 / DSM 46492 / JCM 5070 / NBRC 14893 / NCIMB 12804 / NRRL 8165 / MA-4680).